The chain runs to 315 residues: Protease HtpX homolog (315 aa).

The chain crosses the membrane as a helical span at residues 16-36; that stretch reads LFMGIGYLIGGASGALIALVV. His-130 is a binding site for Zn(2+). Glu-131 is a catalytic residue. His-134 lines the Zn(2+) pocket. 2 helical membrane-spanning segments follow: residues 145–165 and 172–192; these read ITATIAGAISMVAQFGMFFGG and GPGLIGSLALMILAPLGAMLV. A Zn(2+)-binding site is contributed by Glu-201. The tract at residues 282 to 315 is disordered; it reads GGGGASIGRPAGPSPRGAPRSPWSGQPRARGPWG. Residues 288-303 are compositionally biased toward low complexity; it reads IGRPAGPSPRGAPRSP.

This sequence belongs to the peptidase M48B family. The cofactor is Zn(2+).

The protein resides in the cell inner membrane. The sequence is that of Protease HtpX homolog from Rhodopseudomonas palustris (strain BisB5).